The chain runs to 150 residues: Putative STAG3-like protein 4 (150 aa).

Belongs to the SCC3 family.

The sequence is that of Putative STAG3-like protein 4 (STAG3L4) from Homo sapiens (Human).